The sequence spans 482 residues: Glutamate--tRNA ligase (482 aa).

The short motif at 9–19 (PSPTGPIHVGN) is the 'HIGH' region element. 4 residues coordinate Zn(2+): Cys106, Cys108, Cys133, and Asp135. The 'KMSKS' region motif lies at 250–254 (KLSKR). Residue Lys253 coordinates ATP.

It belongs to the class-I aminoacyl-tRNA synthetase family. Glutamate--tRNA ligase type 1 subfamily. Monomer. Zn(2+) serves as cofactor.

The protein localises to the cytoplasm. It catalyses the reaction tRNA(Glu) + L-glutamate + ATP = L-glutamyl-tRNA(Glu) + AMP + diphosphate. Functionally, catalyzes the attachment of glutamate to tRNA(Glu) in a two-step reaction: glutamate is first activated by ATP to form Glu-AMP and then transferred to the acceptor end of tRNA(Glu). The sequence is that of Glutamate--tRNA ligase from Symbiobacterium thermophilum (strain DSM 24528 / JCM 14929 / IAM 14863 / T).